We begin with the raw amino-acid sequence, 224 residues long: Phosphoribosyltransferase domain-containing protein 1 (224 aa).

2 residues coordinate Mg(2+): E140 and D141. GMP contacts are provided by residues 140 to 148 (EDIINTGRT), K172, 193 to 194 (FV), and D200. Mg(2+) is bound at residue D200.

This sequence belongs to the purine/pyrimidine phosphoribosyltransferase family.

The protein is Phosphoribosyltransferase domain-containing protein 1 (prtfdc1) of Xenopus tropicalis (Western clawed frog).